Reading from the N-terminus, the 496-residue chain is Glycerol kinase (496 aa).

Thr14 lines the ADP pocket. Residues Thr14 and Thr15 each contribute to the ATP site. Thr14 is a binding site for sn-glycerol 3-phosphate. Residues Arg84, Glu85, Tyr136, and Asp246 each contribute to the sn-glycerol 3-phosphate site. 5 residues coordinate glycerol: Arg84, Glu85, Tyr136, Asp246, and Gln247. ADP is bound by residues Thr268 and Gly313. The ATP site is built by Thr268, Gly313, Gln317, and Gly414. The ADP site is built by Gly414 and Asn418.

It belongs to the FGGY kinase family.

It catalyses the reaction glycerol + ATP = sn-glycerol 3-phosphate + ADP + H(+). It participates in polyol metabolism; glycerol degradation via glycerol kinase pathway; sn-glycerol 3-phosphate from glycerol: step 1/1. With respect to regulation, inhibited by fructose 1,6-bisphosphate (FBP). Its function is as follows. Key enzyme in the regulation of glycerol uptake and metabolism. Catalyzes the phosphorylation of glycerol to yield sn-glycerol 3-phosphate. This chain is Glycerol kinase, found in Myxococcus xanthus (strain DK1622).